The chain runs to 310 residues: MSKKIINEVIDILEDKKYTYTMIEYPEHNRKSVDIVLNSKEPTLIRVSEDKVTKEEISDLKKIAVSTLTASLVVTNEEEEDIVSVKADNVFAVSPEGFKKVINGEKIFLYRTRGGIFIKIRNYILKHKREEMGYSIGDVAKFLGVSRKAIYDYEKGDSDVSLEVAEKLIDLFGDDIIGDVIWDSIKGKKEVIEEDITEFSPESFKSKLIYKLKENGLNILSLKLTAADLIVKDNENNRYLVTIENKDYNKSMKKFYEAKKLSSYTKSELLIIIRTSKMLKECEDLGYKTYEENDIHSLIDEIKGSNGRQS.

The region spanning 125–180 (LKHKREEMGYSIGDVAKFLGVSRKAIYDYEKGDSDVSLEVAEKLIDLFGDDIIGDV) is the HTH cro/C1-type domain. Positions 136-155 (IGDVAKFLGVSRKAIYDYEK) form a DNA-binding region, H-T-H motif.

This is Putative HTH-type transcriptional regulatory protein YN1551_1579 from Saccharolobus islandicus (strain Y.N.15.51 / Yellowstone #2) (Sulfolobus islandicus).